A 292-amino-acid polypeptide reads, in one-letter code: Elongation factor Ts (292 aa).

The interval 79–82 (TDFV) is involved in Mg(2+) ion dislocation from EF-Tu.

The protein belongs to the EF-Ts family.

The protein localises to the cytoplasm. Functionally, associates with the EF-Tu.GDP complex and induces the exchange of GDP to GTP. It remains bound to the aminoacyl-tRNA.EF-Tu.GTP complex up to the GTP hydrolysis stage on the ribosome. In Staphylococcus haemolyticus (strain JCSC1435), this protein is Elongation factor Ts.